We begin with the raw amino-acid sequence, 138 residues long: Ribulose bisphosphate carboxylase small subunit (138 aa).

The protein belongs to the RuBisCO small chain family. Heterohexadecamer of 8 large and 8 small subunits.

The protein resides in the plastid. The protein localises to the chloroplast. RuBisCO catalyzes two reactions: the carboxylation of D-ribulose 1,5-bisphosphate, the primary event in carbon dioxide fixation, as well as the oxidative fragmentation of the pentose substrate in the photorespiration process. Both reactions occur simultaneously and in competition at the same active site. Although the small subunit is not catalytic it is essential for maximal activity. The chain is Ribulose bisphosphate carboxylase small subunit from Pyropia dentata (Red alga).